We begin with the raw amino-acid sequence, 465 residues long: Argininosuccinate lyase (465 aa).

It belongs to the lyase 1 family. Argininosuccinate lyase subfamily.

The protein localises to the cytoplasm. It catalyses the reaction 2-(N(omega)-L-arginino)succinate = fumarate + L-arginine. It participates in amino-acid biosynthesis; L-arginine biosynthesis; L-arginine from L-ornithine and carbamoyl phosphate: step 3/3. In Rhodopseudomonas palustris (strain BisB18), this protein is Argininosuccinate lyase.